The chain runs to 247 residues: tRNA1(Val) (adenine(37)-N6)-methyltransferase (247 aa).

Belongs to the methyltransferase superfamily. tRNA (adenine-N(6)-)-methyltransferase family.

The protein localises to the cytoplasm. The catalysed reaction is adenosine(37) in tRNA1(Val) + S-adenosyl-L-methionine = N(6)-methyladenosine(37) in tRNA1(Val) + S-adenosyl-L-homocysteine + H(+). Specifically methylates the adenine in position 37 of tRNA(1)(Val) (anticodon cmo5UAC). In Edwardsiella ictaluri (strain 93-146), this protein is tRNA1(Val) (adenine(37)-N6)-methyltransferase.